Reading from the N-terminus, the 332-residue chain is Ketol-acid reductoisomerase (NADP(+)) (332 aa).

One can recognise a KARI N-terminal Rossmann domain in the interval 1 to 182 (MAVIYYDKDC…GSNRAGILET (182 aa)). NADP(+) is bound by residues 25 to 28 (YGAQ) and 83 to 86 (DTSQ). H108 is an active-site residue. Position 134 (G134) interacts with NADP(+). A KARI C-terminal knotted domain is found at 183–328 (TFAEETETDL…AELRSMMSWL (146 aa)). 4 residues coordinate Mg(2+): D191, E195, E227, and E231. Residue S252 coordinates substrate.

The protein belongs to the ketol-acid reductoisomerase family. It depends on Mg(2+) as a cofactor.

The catalysed reaction is (2R)-2,3-dihydroxy-3-methylbutanoate + NADP(+) = (2S)-2-acetolactate + NADPH + H(+). It catalyses the reaction (2R,3R)-2,3-dihydroxy-3-methylpentanoate + NADP(+) = (S)-2-ethyl-2-hydroxy-3-oxobutanoate + NADPH + H(+). It participates in amino-acid biosynthesis; L-isoleucine biosynthesis; L-isoleucine from 2-oxobutanoate: step 2/4. Its pathway is amino-acid biosynthesis; L-valine biosynthesis; L-valine from pyruvate: step 2/4. Involved in the biosynthesis of branched-chain amino acids (BCAA). Catalyzes an alkyl-migration followed by a ketol-acid reduction of (S)-2-acetolactate (S2AL) to yield (R)-2,3-dihydroxy-isovalerate. In the isomerase reaction, S2AL is rearranged via a Mg-dependent methyl migration to produce 3-hydroxy-3-methyl-2-ketobutyrate (HMKB). In the reductase reaction, this 2-ketoacid undergoes a metal-dependent reduction by NADPH to yield (R)-2,3-dihydroxy-isovalerate. The polypeptide is Ketol-acid reductoisomerase (NADP(+)) (Dehalococcoides mccartyi (strain CBDB1)).